The sequence spans 249 residues: 2,3-bisphosphoglycerate-dependent phosphoglycerate mutase (249 aa).

Residues 11–18, 24–25, arginine 63, 90–93, lysine 101, 117–118, and 185–186 each bind substrate; these read RHGNSEWN, TG, ERHY, RR, and GN. Histidine 12 acts as the Tele-phosphohistidine intermediate in catalysis. The active-site Proton donor/acceptor is glutamate 90.

This sequence belongs to the phosphoglycerate mutase family. BPG-dependent PGAM subfamily.

The enzyme catalyses (2R)-2-phosphoglycerate = (2R)-3-phosphoglycerate. Its pathway is carbohydrate degradation; glycolysis; pyruvate from D-glyceraldehyde 3-phosphate: step 3/5. Functionally, catalyzes the interconversion of 2-phosphoglycerate and 3-phosphoglycerate. The polypeptide is 2,3-bisphosphoglycerate-dependent phosphoglycerate mutase (Leifsonia xyli subsp. xyli (strain CTCB07)).